Consider the following 936-residue polypeptide: General transcription factor II-I repeat domain-containing protein 2 (936 aa).

One copy of the GTF2I-like 1 repeat lies at 95–189 (EACPGEAQLL…FLGAESQLGG (95 aa)). The disordered stretch occupies residues 199–222 (PTVPPNDSYGPVSVKTEPMEDSGT). The GTF2I-like 2 repeat unit spans residues 319–413 (LSGLEKIKQL…LPGLELSNVG (95 aa)).

It belongs to the TFII-I family. As to expression, ubiquitous.

It localises to the nucleus. In Mus musculus (Mouse), this protein is General transcription factor II-I repeat domain-containing protein 2 (Gtf2ird2).